The following is a 194-amino-acid chain: Outer-membrane lipoprotein LolB (194 aa).

A signal peptide spans 1-18; the sequence is MKLLQHLTLIFCLLILTA. C19 carries N-palmitoyl cysteine lipidation. A lipid anchor (S-diacylglycerol cysteine) is attached at C19.

This sequence belongs to the LolB family. Monomer.

The protein localises to the cell outer membrane. Its function is as follows. Plays a critical role in the incorporation of lipoproteins in the outer membrane after they are released by the LolA protein. This chain is Outer-membrane lipoprotein LolB, found in Tolumonas auensis (strain DSM 9187 / NBRC 110442 / TA 4).